Consider the following 154-residue polypeptide: uncharacterized protein (154 aa).

An N-terminal signal peptide occupies residues 1 to 19 (MWSLKSTLCIALLVTYSVA). 2 ShKT domains span residues 67–102 (CADDPNTDCTQYTSLCSNAKYTPLLQQFCPKTCGFC) and 113–150 (CVDSSTNCANWEKNGFCSSTFYDCANKKQYCAKTCKLC). 6 disulfide bridges follow: cysteine 67–cysteine 102, cysteine 75–cysteine 95, cysteine 82–cysteine 99, cysteine 113–cysteine 150, cysteine 120–cysteine 143, and cysteine 129–cysteine 147.

This is an uncharacterized protein from Caenorhabditis elegans.